Consider the following 497-residue polypeptide: Lysine--tRNA ligase (497 aa).

Positions 409 and 416 each coordinate Mg(2+).

This sequence belongs to the class-II aminoacyl-tRNA synthetase family. As to quaternary structure, homodimer. Mg(2+) is required as a cofactor.

The protein localises to the cytoplasm. It carries out the reaction tRNA(Lys) + L-lysine + ATP = L-lysyl-tRNA(Lys) + AMP + diphosphate. The chain is Lysine--tRNA ligase from Streptococcus pyogenes serotype M3 (strain ATCC BAA-595 / MGAS315).